Here is a 1158-residue protein sequence, read N- to C-terminus: ATP-dependent helicase/deoxyribonuclease subunit B (1158 aa).

8-15 (GRAGTGKS) contributes to the ATP binding site. [4Fe-4S] cluster is bound by residues cysteine 791, cysteine 1112, cysteine 1115, and cysteine 1121.

Belongs to the helicase family. AddB/RexB type 1 subfamily. In terms of assembly, heterodimer of AddA and AddB. Mg(2+) serves as cofactor. It depends on [4Fe-4S] cluster as a cofactor.

The heterodimer acts as both an ATP-dependent DNA helicase and an ATP-dependent, dual-direction single-stranded exonuclease. Recognizes the chi site generating a DNA molecule suitable for the initiation of homologous recombination. The AddB subunit has 5' -&gt; 3' nuclease activity but not helicase activity. This Clostridium perfringens (strain SM101 / Type A) protein is ATP-dependent helicase/deoxyribonuclease subunit B.